A 574-amino-acid polypeptide reads, in one-letter code: Eukaryotic translation initiation factor 3 subunit D (574 aa).

The disordered stretch occupies residues 153 to 178 (QRRGGNARQGQRGQGGRFGGDRPKER). Over residues 154–163 (RRGGNARQGQ) the composition is skewed to low complexity. Positions 312–326 (PVETLTVSETSAEPP) are RNA gate. Residues 555-574 (EGTFDSERESSEEENSDDDQ) form a disordered region. Residues 564-574 (SSEEENSDDDQ) show a composition bias toward acidic residues.

The protein belongs to the eIF-3 subunit D family. In terms of assembly, component of the eukaryotic translation initiation factor 3 (eIF-3) complex.

The protein localises to the cytoplasm. Functionally, mRNA cap-binding component of the eukaryotic translation initiation factor 3 (eIF-3) complex, which is involved in protein synthesis of a specialized repertoire of mRNAs and, together with other initiation factors, stimulates binding of mRNA and methionyl-tRNAi to the 40S ribosome. The eIF-3 complex specifically targets and initiates translation of a subset of mRNAs involved in cell proliferation. In the eIF-3 complex, eif3d specifically recognizes and binds the 7-methylguanosine cap of a subset of mRNAs. In Caenorhabditis briggsae, this protein is Eukaryotic translation initiation factor 3 subunit D.